A 101-amino-acid chain; its full sequence is A-type ATP synthase subunit F (101 aa).

This sequence belongs to the V-ATPase F subunit family. In terms of assembly, has multiple subunits with at least A(3), B(3), C, D, E, F, H, I and proteolipid K(x).

The protein localises to the cell membrane. Functionally, component of the A-type ATP synthase that produces ATP from ADP in the presence of a proton gradient across the membrane. This is A-type ATP synthase subunit F from Archaeoglobus fulgidus (strain ATCC 49558 / DSM 4304 / JCM 9628 / NBRC 100126 / VC-16).